The sequence spans 205 residues: Putative 3-methyladenine DNA glycosylase (205 aa).

Belongs to the DNA glycosylase MPG family.

The polypeptide is Putative 3-methyladenine DNA glycosylase (Mycolicibacterium paratuberculosis (strain ATCC BAA-968 / K-10) (Mycobacterium paratuberculosis)).